The chain runs to 358 residues: Heme A synthase (358 aa).

Transmembrane regions (helical) follow at residues 25-45 (LVRYWLYAVFAVLIAIVMVGG), 111-131 (LLARFVGFLVAVPLGFFWLTG), 141-161 (MLGLLALGGLQGAIGWWMVAS), 176-196 (IHLTTACVIITAVFYIARGLV), 210-230 (FAGWIVFAVLVQIYLGGLVAG), 269-289 (VQFVHRMFAYTVLLLAILHAV), 304-324 (TIVLVGLVFIQAMIGIATLLM), and 326-346 (APLHLGLTHQFFALVVLAFAV). Residue His273 participates in heme binding. His334 contributes to the heme binding site.

Belongs to the COX15/CtaA family. Type 2 subfamily. In terms of assembly, interacts with CtaB. Requires heme b as cofactor.

It localises to the cell membrane. It catalyses the reaction Fe(II)-heme o + 2 A + H2O = Fe(II)-heme a + 2 AH2. It functions in the pathway porphyrin-containing compound metabolism; heme A biosynthesis; heme A from heme O: step 1/1. Its function is as follows. Catalyzes the conversion of heme O to heme A by two successive hydroxylations of the methyl group at C8. The first hydroxylation forms heme I, the second hydroxylation results in an unstable dihydroxymethyl group, which spontaneously dehydrates, resulting in the formyl group of heme A. The protein is Heme A synthase of Brucella suis (strain ATCC 23445 / NCTC 10510).